A 461-amino-acid polypeptide reads, in one-letter code: Argininosuccinate lyase (461 aa).

This sequence belongs to the lyase 1 family. Argininosuccinate lyase subfamily.

The protein localises to the cytoplasm. It catalyses the reaction 2-(N(omega)-L-arginino)succinate = fumarate + L-arginine. Its pathway is amino-acid biosynthesis; L-arginine biosynthesis; L-arginine from L-ornithine and carbamoyl phosphate: step 3/3. The polypeptide is Argininosuccinate lyase (Chlorobium chlorochromatii (strain CaD3)).